The chain runs to 260 residues: Transcription factor BEE 1 (260 aa).

The interval 118-139 (ETGSLRRGKRLKKKKEEEDEKE) is disordered. The bHLH domain maps to 151–201 (QATDSHSLAERVRRGKINERLRCLQDMVPGCYKAMGMATMLDEIINYVQSL).

It is found in the nucleus. In terms of biological role, positive regulator of brassinosteroid signaling. In Arabidopsis thaliana (Mouse-ear cress), this protein is Transcription factor BEE 1 (BEE1).